Reading from the N-terminus, the 578-residue chain is GTP diphosphokinase CRSH3, chloroplastic (578 aa).

The transit peptide at 1 to 45 directs the protein to the chloroplast; that stretch reads MANAGVNETVAVAVAIDAPGVGHDHGAAGEVRRPSTRRLAPAGSG. Residues 99-199 form the HD domain; that stretch reads SVSRALVVAA…LELAVKLDAM (101 aa). EF-hand domains are found at residues 468-503 and 506-537; these read ATAGNVERAFQLLDKNGDGRISMEELTEIMEDLGAG and DAEELMRLLDANSDGSLSSDEFALFQKRVKLK. Asp481, Asn483, Asp485, Arg487, Glu492, Asp515, Asn517, Asp519, Ser521, and Glu526 together coordinate Ca(2+).

It belongs to the RelA/SpoT family. As to expression, expressed in roots and shoots.

It is found in the plastid. Its subcellular location is the chloroplast. It carries out the reaction GTP + ATP = guanosine 3'-diphosphate 5'-triphosphate + AMP. Activated by calcium. Its function is as follows. Possesses calcium-dependent ppGpp (guanosine 3'-diphosphate 5'-diphosphate) synthetase activity in vitro and is able to functionally complement E.coli relA mutants. May be involved in a rapid plant ppGpp-mediated response to pathogens and other stresses. The chain is GTP diphosphokinase CRSH3, chloroplastic from Oryza sativa subsp. japonica (Rice).